The sequence spans 212 residues: Cytidylate kinase (212 aa).

9–17 (GPAAAGKGT) provides a ligand contact to ATP.

The protein belongs to the cytidylate kinase family. Type 1 subfamily.

It is found in the cytoplasm. The catalysed reaction is CMP + ATP = CDP + ADP. It catalyses the reaction dCMP + ATP = dCDP + ADP. The polypeptide is Cytidylate kinase (Rhizobium meliloti (strain 1021) (Ensifer meliloti)).